The sequence spans 162 residues: 2-C-methyl-D-erythritol 2,4-cyclodiphosphate synthase (162 aa).

2 residues coordinate a divalent metal cation: Asp-12 and His-14. Residues 12–14 and 38–39 each bind 4-CDP-2-C-methyl-D-erythritol 2-phosphate; these read DVH and HS. His-46 provides a ligand contact to a divalent metal cation. 4-CDP-2-C-methyl-D-erythritol 2-phosphate is bound by residues 60–62, 65–69, and Arg-146; these read DIG and FPDTD.

This sequence belongs to the IspF family. Homotrimer. The cofactor is a divalent metal cation.

It carries out the reaction 4-CDP-2-C-methyl-D-erythritol 2-phosphate = 2-C-methyl-D-erythritol 2,4-cyclic diphosphate + CMP. Its pathway is isoprenoid biosynthesis; isopentenyl diphosphate biosynthesis via DXP pathway; isopentenyl diphosphate from 1-deoxy-D-xylulose 5-phosphate: step 4/6. Its function is as follows. Involved in the biosynthesis of isopentenyl diphosphate (IPP) and dimethylallyl diphosphate (DMAPP), two major building blocks of isoprenoid compounds. Catalyzes the conversion of 4-diphosphocytidyl-2-C-methyl-D-erythritol 2-phosphate (CDP-ME2P) to 2-C-methyl-D-erythritol 2,4-cyclodiphosphate (ME-CPP) with a corresponding release of cytidine 5-monophosphate (CMP). The sequence is that of 2-C-methyl-D-erythritol 2,4-cyclodiphosphate synthase from Bordetella petrii (strain ATCC BAA-461 / DSM 12804 / CCUG 43448).